Here is a 271-residue protein sequence, read N- to C-terminus: Thermoregulatory protein LcrF (271 aa).

One can recognise an HTH araC/xylS-type domain in the interval 167 to 265 (ERLQKFMEEN…GCTPSQARLT (99 aa)). 2 DNA-binding regions (H-T-H motif) span residues 184-205 (SKFA…GTVY) and 232-255 (IVDI…RRRF).

Its function is as follows. Transcriptional activator of the thermally regulated virulent yopE gene. LcrF activity could be modulated by the interaction with an inducer molecule serving as a temperature messenger. The availability of the messenger would in turn be controlled by a temperature-responsive process serving as a cellular thermometer. This chain is Thermoregulatory protein LcrF (lcrF), found in Yersinia pestis.